A 499-amino-acid polypeptide reads, in one-letter code: Cytosol aminopeptidase (499 aa).

Lysine 267 and aspartate 272 together coordinate Mn(2+). Lysine 279 is a catalytic residue. Positions 290, 349, and 351 each coordinate Mn(2+). Arginine 353 is an active-site residue.

The protein belongs to the peptidase M17 family. The cofactor is Mn(2+).

The protein resides in the cytoplasm. The enzyme catalyses Release of an N-terminal amino acid, Xaa-|-Yaa-, in which Xaa is preferably Leu, but may be other amino acids including Pro although not Arg or Lys, and Yaa may be Pro. Amino acid amides and methyl esters are also readily hydrolyzed, but rates on arylamides are exceedingly low.. It catalyses the reaction Release of an N-terminal amino acid, preferentially leucine, but not glutamic or aspartic acids.. Presumably involved in the processing and regular turnover of intracellular proteins. Catalyzes the removal of unsubstituted N-terminal amino acids from various peptides. The chain is Cytosol aminopeptidase (pepA) from Buchnera aphidicola subsp. Acyrthosiphon pisum (strain APS) (Acyrthosiphon pisum symbiotic bacterium).